A 309-amino-acid chain; its full sequence is Porphobilinogen deaminase (309 aa).

Cysteine 242 carries the S-(dipyrrolylmethanemethyl)cysteine modification.

This sequence belongs to the HMBS family. In terms of assembly, monomer. Dipyrromethane is required as a cofactor.

The catalysed reaction is 4 porphobilinogen + H2O = hydroxymethylbilane + 4 NH4(+). The protein operates within porphyrin-containing compound metabolism; protoporphyrin-IX biosynthesis; coproporphyrinogen-III from 5-aminolevulinate: step 2/4. In terms of biological role, tetrapolymerization of the monopyrrole PBG into the hydroxymethylbilane pre-uroporphyrinogen in several discrete steps. This is Porphobilinogen deaminase from Legionella pneumophila (strain Lens).